A 234-amino-acid chain; its full sequence is Sugar fermentation stimulation protein homolog (234 aa).

It belongs to the SfsA family.

The polypeptide is Sugar fermentation stimulation protein homolog (Shewanella halifaxensis (strain HAW-EB4)).